The primary structure comprises 475 residues: Glycogen synthase (475 aa).

Residue Lys-15 participates in ADP-alpha-D-glucose binding.

This sequence belongs to the glycosyltransferase 1 family. Bacterial/plant glycogen synthase subfamily.

The catalysed reaction is [(1-&gt;4)-alpha-D-glucosyl](n) + ADP-alpha-D-glucose = [(1-&gt;4)-alpha-D-glucosyl](n+1) + ADP + H(+). The protein operates within glycan biosynthesis; glycogen biosynthesis. Functionally, synthesizes alpha-1,4-glucan chains using ADP-glucose. This Kosmotoga olearia (strain ATCC BAA-1733 / DSM 21960 / TBF 19.5.1) protein is Glycogen synthase.